A 537-amino-acid chain; its full sequence is Eukaryotic translation initiation factor 3 subunit L (537 aa).

In terms of domain architecture, PCI spans Thr-300–His-512.

Belongs to the eIF-3 subunit L family. In terms of assembly, component of the eukaryotic translation initiation factor 3 (eIF-3) complex.

It is found in the cytoplasm. Component of the eukaryotic translation initiation factor 3 (eIF-3) complex, which is involved in protein synthesis of a specialized repertoire of mRNAs and, together with other initiation factors, stimulates binding of mRNA and methionyl-tRNAi to the 40S ribosome. The eIF-3 complex specifically targets and initiates translation of a subset of mRNAs involved in cell proliferation. The protein is Eukaryotic translation initiation factor 3 subunit L of Culex quinquefasciatus (Southern house mosquito).